A 266-amino-acid polypeptide reads, in one-letter code: Phosphatidylglycerol--prolipoprotein diacylglyceryl transferase (266 aa).

7 helical membrane-spanning segments follow: residues 19-39 (IWGP…FAFA), 61-81 (LMFW…TLFY), 91-111 (LYLF…LGVI), 125-145 (FLQV…FGRI), 176-196 (PSQL…ILWF), 204-224 (GAVS…VEFF), and 237-257 (GMSM…ILMV). Residue Arg-144 coordinates a 1,2-diacyl-sn-glycero-3-phospho-(1'-sn-glycerol).

This sequence belongs to the Lgt family.

The protein localises to the cell inner membrane. It catalyses the reaction L-cysteinyl-[prolipoprotein] + a 1,2-diacyl-sn-glycero-3-phospho-(1'-sn-glycerol) = an S-1,2-diacyl-sn-glyceryl-L-cysteinyl-[prolipoprotein] + sn-glycerol 1-phosphate + H(+). Its pathway is protein modification; lipoprotein biosynthesis (diacylglyceryl transfer). Its function is as follows. Catalyzes the transfer of the diacylglyceryl group from phosphatidylglycerol to the sulfhydryl group of the N-terminal cysteine of a prolipoprotein, the first step in the formation of mature lipoproteins. The protein is Phosphatidylglycerol--prolipoprotein diacylglyceryl transferase of Idiomarina loihiensis (strain ATCC BAA-735 / DSM 15497 / L2-TR).